Reading from the N-terminus, the 353-residue chain is uncharacterized protein (353 aa).

A signal peptide spans 1 to 28 (MHLTIMRRFAVLLLLAIFLGGCSGSNGA).

This is an uncharacterized protein from Archaeoglobus fulgidus (strain ATCC 49558 / DSM 4304 / JCM 9628 / NBRC 100126 / VC-16).